The sequence spans 612 residues: Mineralocorticoid receptor (612 aa).

The segment at 1–228 (GNEIADSTVS…STGPSRPSKV (228 aa)) is modulating. Zn(2+)-binding residues include Cys-229, Cys-232, Cys-246, Cys-249, Cys-269, Cys-275, Cys-285, and Cys-288. NR C4-type zinc fingers lie at residues 229 to 249 (CLVCGDEASGCHYGVVTCGSC) and 269 to 293 (CAGRNDCIIDKIRRKNCPACRLQKC). A DNA-binding region (nuclear receptor) is located at residues 229 to 298 (CLVCGDEASG…RLQKCLQAGM (70 aa)). The interval 299 to 349 (NLGARKSKKLGKLKGVHEEHPQQPLQQTPTASPKEDTTLTSSSKEPSANSN) is hinge. The segment at 310-348 (KLKGVHEEHPQQPLQQTPTASPKEDTTLTSSSKEPSANS) is disordered. A compositionally biased stretch (low complexity) spans 339 to 348 (SSSKEPSANS). The region spanning 350-592 (SLVPLISAVS…EFPAMLVEII (243 aa)) is the NR LBD domain. 21-hydroxyprogesterone is bound by residues Asn-398 and Gln-404. Aldosterone contacts are provided by Asn-398 and Gln-404. 2 residues coordinate progesterone: Asn-398 and Gln-404. The segment at 410 to 413 (KWAK) is important for coactivator binding. 2 residues coordinate 21-hydroxyprogesterone: Arg-445 and Thr-573. Positions 445 and 573 each coordinate aldosterone. The progesterone site is built by Arg-445 and Thr-573.

Belongs to the nuclear hormone receptor family. NR3 subfamily.

Its subcellular location is the cytoplasm. It localises to the nucleus. Functionally, receptor for both mineralocorticoids (MC) such as aldosterone and glucocorticoids (GC) such as corticosterone or cortisol. Binds to mineralocorticoid response elements (MRE) and transactivates target genes. The effect of MC is to increase ion and water transport and thus raise extracellular fluid volume and blood pressure and lower potassium levels. The polypeptide is Mineralocorticoid receptor (nr3c2) (Xenopus laevis (African clawed frog)).